Consider the following 75-residue polypeptide: Putative DNA-directed RNA polymerase subunit omega (75 aa).

It belongs to the RNA polymerase subunit omega family.

It localises to the plastid. The protein localises to the chloroplast. The catalysed reaction is RNA(n) + a ribonucleoside 5'-triphosphate = RNA(n+1) + diphosphate. In terms of biological role, may be involved in RNA polymerase activity. This Mesostigma viride (Green alga) protein is Putative DNA-directed RNA polymerase subunit omega (rpoZ).